The sequence spans 428 residues: Glutamate-1-semialdehyde 2,1-aminomutase (428 aa).

N6-(pyridoxal phosphate)lysine is present on K265.

It belongs to the class-III pyridoxal-phosphate-dependent aminotransferase family. HemL subfamily. As to quaternary structure, homodimer. The cofactor is pyridoxal 5'-phosphate.

It localises to the cytoplasm. The enzyme catalyses (S)-4-amino-5-oxopentanoate = 5-aminolevulinate. It functions in the pathway porphyrin-containing compound metabolism; protoporphyrin-IX biosynthesis; 5-aminolevulinate from L-glutamyl-tRNA(Glu): step 2/2. This is Glutamate-1-semialdehyde 2,1-aminomutase from Shewanella woodyi (strain ATCC 51908 / MS32).